Reading from the N-terminus, the 106-residue chain is NADH-quinone oxidoreductase subunit K (106 aa).

3 helical membrane passes run 10 to 30, 35 to 55, and 67 to 87; these read IHYYLILAMIIFTIGVAGVMV, VLIFMSVELILNSVNLVFVTF, and VVFFVMAIAAAEAAIGLAIVI.

It belongs to the complex I subunit 4L family. NDH-1 is composed of 14 different subunits. Subunits NuoA, H, J, K, L, M, N constitute the membrane sector of the complex.

It localises to the cell inner membrane. It carries out the reaction a quinone + NADH + 5 H(+)(in) = a quinol + NAD(+) + 4 H(+)(out). NDH-1 shuttles electrons from NADH, via FMN and iron-sulfur (Fe-S) centers, to quinones in the respiratory chain. The immediate electron acceptor for the enzyme in this species is believed to be ubiquinone. Couples the redox reaction to proton translocation (for every two electrons transferred, four hydrogen ions are translocated across the cytoplasmic membrane), and thus conserves the redox energy in a proton gradient. The sequence is that of NADH-quinone oxidoreductase subunit K from Leptospira borgpetersenii serovar Hardjo-bovis (strain JB197).